The following is a 434-amino-acid chain: Alpha-enolase (434 aa).

An N-acetylserine modification is found at serine 2. The residue at position 5 (lysine 5) is an N6-acetyllysine. Serine 27 carries the post-translational modification Phosphoserine. Residues 31 to 38 (FRAAVPSG) are epitope recognized by CAR and healthy patient antibodies. Serine 40 contacts Mg(2+). At tyrosine 44 the chain carries Phosphotyrosine. The epitope recognized by CAR antibodies stretch occupies residues 56-63 (RYMGKGVS). Lysine 60 carries the N6-acetyllysine; alternate modification. Residue lysine 60 is modified to N6-succinyllysine; alternate. N6-acetyllysine is present on residues lysine 64 and lysine 71. An N6-acetyllysine; alternate modification is found at lysine 89. Lysine 89 carries the N6-succinyllysine; alternate modification. An N6-acetyllysine mark is found at lysine 92 and lysine 126. The segment at 97–237 (MDGTENKSKF…KTAIGKAGYT (141 aa)) is required for repression of c-myc promoter activity. The substrate site is built by histidine 158 and glutamate 167. N6-acetyllysine is present on residues lysine 193 and lysine 199. The residue at position 202 (lysine 202) is an N6-acetyllysine; alternate. Residue lysine 202 forms a Glycyl lysine isopeptide (Lys-Gly) (interchain with G-Cter in SUMO2); alternate linkage. The active-site Proton donor is glutamate 210. An N6-acetyllysine; alternate mark is found at lysine 228 and lysine 233. N6-succinyllysine; alternate is present on lysine 228. Position 228 is an N6-(2-hydroxyisobutyryl)lysine; alternate (lysine 228). At lysine 233 the chain carries N6-malonyllysine; alternate. Mg(2+) is bound at residue aspartate 245. Position 254 is a phosphoserine (serine 254). At lysine 256 the chain carries N6-acetyllysine. 2 positions are modified to phosphoserine: serine 263 and serine 272. Residue lysine 281 is modified to N6-acetyllysine; alternate. Position 281 is an N6-(2-hydroxyisobutyryl)lysine; alternate (lysine 281). At lysine 285 the chain carries N6-acetyllysine. Tyrosine 287 carries the post-translational modification Phosphotyrosine. Residue serine 291 is modified to Phosphoserine. Positions 293 and 318 each coordinate Mg(2+). 2 residues coordinate substrate: glutamate 293 and aspartate 318. Lysine 335 and lysine 343 each carry N6-acetyllysine. The Proton acceptor role is filled by lysine 343. Substrate-binding positions include 370-373 (SHRS) and lysine 394. The tract at residues 405 to 434 (AKYNQLLRIEEELGSKAKFAGRNFRNPLAK) is required for interaction with PLG. The residue at position 406 (lysine 406) is an N6-acetyllysine. At lysine 420 the chain carries N6-acetyllysine; alternate. Lysine 420 is subject to N6-succinyllysine; alternate. Lysine 420 carries the post-translational modification N6-malonyllysine; alternate.

This sequence belongs to the enolase family. As to quaternary structure, mammalian enolase is composed of 3 isozyme subunits, alpha, beta and gamma, which can form homodimers or heterodimers which are cell-type and development-specific. ENO1 interacts with PLG in the neuronal plasma membrane and promotes its activation. The C-terminal lysine is required for this binding. Isoform MBP-1 interacts with TRAPPC2B. Interacts with ENO4 and PGAM2. Interacts with CMTM6. It depends on Mg(2+) as a cofactor. In terms of processing, ISGylated. Post-translationally, lysine 2-hydroxyisobutyrylation (Khib) by p300/EP300 activates the phosphopyruvate hydratase activity. The alpha/alpha homodimer is expressed in embryo and in most adult tissues. The alpha/beta heterodimer and the beta/beta homodimer are found in striated muscle, and the alpha/gamma heterodimer and the gamma/gamma homodimer in neurons.

The protein resides in the cytoplasm. The protein localises to the cell membrane. Its subcellular location is the myofibril. It localises to the sarcomere. It is found in the m line. The protein resides in the nucleus. The catalysed reaction is (2R)-2-phosphoglycerate = phosphoenolpyruvate + H2O. It participates in carbohydrate degradation; glycolysis; pyruvate from D-glyceraldehyde 3-phosphate: step 4/5. Its function is as follows. Glycolytic enzyme the catalyzes the conversion of 2-phosphoglycerate to phosphoenolpyruvate. In addition to glycolysis, involved in various processes such as growth control, hypoxia tolerance and allergic responses. May also function in the intravascular and pericellular fibrinolytic system due to its ability to serve as a receptor and activator of plasminogen on the cell surface of several cell-types such as leukocytes and neurons. Stimulates immunoglobulin production. Functionally, binds to the myc promoter and acts as a transcriptional repressor. May be a tumor suppressor. In Homo sapiens (Human), this protein is Alpha-enolase (ENO1).